The following is an 80-amino-acid chain: uncharacterized protein (80 aa).

A signal peptide spans 1–20 (MVAADHRALGSNKSYPASQT). The segment at 1 to 21 (MVAADHRALGSNKSYPASQTA) is disordered. The segment covering 11–21 (SNKSYPASQTA) has biased composition (polar residues).

This is an uncharacterized protein from Mycobacterium tuberculosis (strain CDC 1551 / Oshkosh).